We begin with the raw amino-acid sequence, 238 residues long: Probable transcriptional regulatory protein STER_0242 (238 aa).

This sequence belongs to the TACO1 family. YeeN subfamily.

It is found in the cytoplasm. In Streptococcus thermophilus (strain ATCC BAA-491 / LMD-9), this protein is Probable transcriptional regulatory protein STER_0242.